The sequence spans 606 residues: NADH-ubiquinone oxidoreductase chain 5 (606 aa).

Transmembrane regions (helical) follow at residues 4-24, 43-63, 84-104, 114-134, 140-160, 171-191, 213-233, 241-261, 272-292, 301-320, 325-347, 366-386, 413-433, 457-477, 485-505, and 582-602; these read FSSLTLVTLILLTMPIAAINF, AFITSMIPTMMFIHTGQEMII, FFSMMFVPVALFVTWSIMEFS, INQFFKYLLLFLITMLILVTA, LFIGWEGVGIMSFLLIGWWYG, AILYNRIGDIGFILAMAWFLI, LMGLILAATGKSAQFGLHPWL, TPVSALLHSSTMVVAGIFLLI, FGQSIMLCLGAMTTLFTAMCA, IIAFSTSSQLGLMMVTIGIN, AFLHICTHAFFKAMLFMCSGSII, MPFTTTALIIGSLALTGMPFL, LVATSFTAIYSTRIIFFALLG, LLIGSLFAGFIISNNIPPMTI, YLKMTALTVTILGFILALEIS, and GLIKLYFLSFLITILISTTLL.

Belongs to the complex I subunit 5 family. In terms of assembly, core subunit of respiratory chain NADH dehydrogenase (Complex I) which is composed of 45 different subunits.

Its subcellular location is the mitochondrion inner membrane. The catalysed reaction is a ubiquinone + NADH + 5 H(+)(in) = a ubiquinol + NAD(+) + 4 H(+)(out). Functionally, core subunit of the mitochondrial membrane respiratory chain NADH dehydrogenase (Complex I) which catalyzes electron transfer from NADH through the respiratory chain, using ubiquinone as an electron acceptor. Essential for the catalytic activity and assembly of complex I. The sequence is that of NADH-ubiquinone oxidoreductase chain 5 (MT-ND5) from Ovis aries (Sheep).